The primary structure comprises 159 residues: Phosphopantetheine adenylyltransferase (159 aa).

Position 8 (Ser8) interacts with substrate. ATP is bound by residues 8 to 9 (SF) and His16. 3 residues coordinate substrate: Lys40, Thr72, and Arg86. ATP is bound by residues 87–89 (GLR), Glu97, and 122–128 (HSFVSSS).

This sequence belongs to the bacterial CoaD family. In terms of assembly, homohexamer. Mg(2+) serves as cofactor.

The protein localises to the cytoplasm. The catalysed reaction is (R)-4'-phosphopantetheine + ATP + H(+) = 3'-dephospho-CoA + diphosphate. Its pathway is cofactor biosynthesis; coenzyme A biosynthesis; CoA from (R)-pantothenate: step 4/5. Reversibly transfers an adenylyl group from ATP to 4'-phosphopantetheine, yielding dephospho-CoA (dPCoA) and pyrophosphate. In Synechococcus sp. (strain JA-2-3B'a(2-13)) (Cyanobacteria bacterium Yellowstone B-Prime), this protein is Phosphopantetheine adenylyltransferase.